Reading from the N-terminus, the 2276-residue chain is Poly [ADP-ribose] polymerase tankyrase (2276 aa).

Basic residues-rich tracts occupy residues 1 to 15 (MARR…VKAA) and 87 to 98 (KAVKAPKVKAPS). Disordered regions lie at residues 1-20 (MARR…KIDG) and 79-103 (SSKT…KGND). 15 ANK repeats span residues 345 to 374 (KNIT…TINI), 378 to 407 (DNWY…SVTM), 411 to 440 (QTET…DLEK), 461 to 490 (SGNS…IVVD), 498 to 527 (NRLT…LVEG), 531 to 560 (KKRT…SLTL), 564 to 593 (SGNT…NILS), 598 to 627 (WQLY…KDKA), 675 to 725 (SGQT…KVDV), 729 to 758 (EDNT…NKRN), 970 to 999 (KDDV…EMHL), 1171 to 1200 (NGNT…HVDL), 1204 to 1233 (DGNT…DVTE), 1472 to 1501 (GLIP…SLKT), and 1505 to 1535 (YGRT…AVVL). The disordered stretch occupies residues 1570-1649 (VPARVESDEE…STGPKRKKLV (80 aa)). Acidic residues-rich tracts occupy residues 1576-1590 (SDEE…ESGE) and 1612-1622 (SDDEDDDDDDS). The stretch at 1662-1706 (KENNPLHYFIEPLAWENVELLGDLAAANKTAIVQCLIDKRSPNPI) is one ANK 16 repeat. One can recognise a WGR domain in the interval 1788-1889 (GLVSFCDETQ…ANFRDMPKKY (102 aa)). The 136-residue stretch at 1910-2045 (KNTEKDPIRR…EIETATRLLC (136 aa)) folds into the PARP alpha-helical domain. In terms of domain architecture, PARP catalytic spans 2047-2276 (AEFRQDLDRV…VLPKYIVMYK (230 aa)).

Expressed throughout the head and tail, in germ cells and somatic cells.

The protein resides in the nucleus. Its subcellular location is the chromosome. The catalysed reaction is NAD(+) + (ADP-D-ribosyl)n-acceptor = nicotinamide + (ADP-D-ribosyl)n+1-acceptor + H(+).. It catalyses the reaction L-aspartyl-[protein] + NAD(+) = 4-O-(ADP-D-ribosyl)-L-aspartyl-[protein] + nicotinamide. The enzyme catalyses L-glutamyl-[protein] + NAD(+) = 5-O-(ADP-D-ribosyl)-L-glutamyl-[protein] + nicotinamide. Functionally, poly[ADP-ribose] polymerases modify various nuclear proteins by poly(ADP-ribosyl)ation, a post-translational modification synthesized after DNA damage that appears as an obligatory step in a detection/signaling pathway leading to the reparation of DNA strand breaks and programmed cell death. The protein is Poly [ADP-ribose] polymerase tankyrase of Caenorhabditis elegans.